The chain runs to 475 residues: Retrotransposon Gag-like protein 3 (475 aa).

2 stretches are compositionally biased toward basic and acidic residues: residues 51-66 (LLRK…KLPE) and 78-87 (KTPEFKEPQK). 3 disordered regions span residues 51-101 (LLRK…EPPA), 152-173 (EPKN…APEY), and 397-421 (DPNP…ENQP). A CCHC-type zinc finger spans residues 443–462 (RLCLYCGYPGHFARDCPVKP).

It localises to the nucleus. May function as a transcriptional regulator. Plays a role in postnatal myogenesis, may be involved in the regulation of satellite cells self-renewal. In Homo sapiens (Human), this protein is Retrotransposon Gag-like protein 3.